We begin with the raw amino-acid sequence, 318 residues long: N-acyl-aromatic-L-amino acid amidohydrolase (carboxylate-forming) (318 aa).

Residues 1–210 form a hydrolytic domain region; it reads MSSLPGSREP…ILDFIELFNQ (210 aa). Zn(2+) contacts are provided by His-21 and Glu-24. Substrate contacts are provided by residues Arg-63 and 70–71; that span reads NR. His-116 contributes to the Zn(2+) binding site. Substrate-binding residues include Glu-177 and Tyr-287. The tract at residues 211–318 is shielding domain; that stretch reads GMDLPAFEMD…RLTPRSTQTP (108 aa). Residue Thr-317 is modified to Phosphothreonine.

It belongs to the AspA/AstE family. Aspartoacylase subfamily. In terms of assembly, exists as a mixture of homodimers and homotetramer, both catalytically active. It depends on Zn(2+) as a cofactor. Expressed predominantly in kidney and to a lesser extent in liver. Weakly expressed in heart, small intestine, brain, lung, testis, and stomach.

It is found in the apical cell membrane. It localises to the cytoplasm. The catalysed reaction is an N-acyl-aromatic L-alpha-amino acid + H2O = an aromatic L-alpha-amino acid + a carboxylate. It carries out the reaction an N-acetyl-L-cysteine-S-conjugate + H2O = an S-substituted L-cysteine + acetate. Functionally, plays an important role in deacetylating mercapturic acids in kidney proximal tubules. Also acts on N-acetyl-aromatic amino acids. This is N-acyl-aromatic-L-amino acid amidohydrolase (carboxylate-forming) (Acy3) from Mus musculus (Mouse).